Consider the following 668-residue polypeptide: Small ribosomal subunit protein mS81 (rPPR8) (668 aa).

The transit peptide at 1–36 (MRYQQWRLMLLRSYHRSHLPYLSPCSQVTSISSRSF) directs the protein to the mitochondrion. PPR repeat units follow at residues 286–320 (DEKT…GYEV), 321–355 (EIET…SSSS), 396–430 (TDSL…GYVP), 431–465 (SGDM…GNNL), 466–496 (DDKA…MVGN), 502–537 (ADYS…QLKP), and 543–577 (KSLV…GFPP).

It belongs to the PPR family. P subfamily. Component of the mitochondrial ribosome small subunit.

The protein resides in the mitochondrion. The chain is Small ribosomal subunit protein mS81 (rPPR8) from Arabidopsis thaliana (Mouse-ear cress).